A 392-amino-acid polypeptide reads, in one-letter code: tRNA (guanine-N(7)-)-methyltransferase (392 aa).

Residues Glu123, Glu148, and Asp175 each coordinate S-adenosyl-L-methionine. 2 residues coordinate substrate: Lys201 and Asp231.

It belongs to the class I-like SAM-binding methyltransferase superfamily. TrmB family.

It catalyses the reaction guanosine(46) in tRNA + S-adenosyl-L-methionine = N(7)-methylguanosine(46) in tRNA + S-adenosyl-L-homocysteine. The protein operates within tRNA modification; N(7)-methylguanine-tRNA biosynthesis. Functionally, catalyzes the formation of N(7)-methylguanine at position 46 (m7G46) in tRNA. This chain is tRNA (guanine-N(7)-)-methyltransferase, found in Campylobacter jejuni subsp. doylei (strain ATCC BAA-1458 / RM4099 / 269.97).